We begin with the raw amino-acid sequence, 379 residues long: Alanine racemase (379 aa).

K37 serves as the catalytic Proton acceptor; specific for D-alanine. K37 carries the post-translational modification N6-(pyridoxal phosphate)lysine. R139 is a substrate binding site. The active-site Proton acceptor; specific for L-alanine is the Y266. M314 serves as a coordination point for substrate.

The protein belongs to the alanine racemase family. Requires pyridoxal 5'-phosphate as cofactor.

It catalyses the reaction L-alanine = D-alanine. The protein operates within amino-acid biosynthesis; D-alanine biosynthesis; D-alanine from L-alanine: step 1/1. Catalyzes the interconversion of L-alanine and D-alanine. May also act on other amino acids. In Sorangium cellulosum (strain So ce56) (Polyangium cellulosum (strain So ce56)), this protein is Alanine racemase (alr).